We begin with the raw amino-acid sequence, 44 residues long: Conotoxin S5.1 (44 aa).

In terms of processing, contains 3 disulfide bonds. Expressed by the venom duct.

The protein localises to the secreted. The sequence is that of Conotoxin S5.1 from Conus striatus (Striated cone).